Consider the following 522-residue polypeptide: Protein tweety homolog 3 (522 aa).

Topologically, residues 1–43 (MAAAISYTPPWWVNLLHRLPHLNLQWESLNGDFRPEDPDYQQS) are extracellular. A helical membrane pass occupies residues 44-64 (LMLLACVALSCLALDLLFLLF). The Cytoplasmic segment spans residues 65-87 (YSFWFCCRHRKTEENTNADCCCT). Residues 88–108 (VWCVIVATLVCSAGIAVGFYG) form a helical membrane-spanning segment. The Extracellular segment spans residues 109 to 211 (NGETSDGIHR…VDLFDWYRWL (103 aa)). The Ca(2+) site is built by Glu111 and Asp114. N-linked (GlcNAc...) asparagine glycans are attached at residues Asn127 and Asn145. A helical transmembrane segment spans residues 212-232 (GYLGLLLFHVFICLLVLFGLI). Residues 233–238 (RNSKGT) are Cytoplasmic-facing. The chain crosses the membrane as a helical span at residues 239–259 (LICVCFLGMMALIISWASMGL). At 260 to 386 (ELAVAVGSSD…LTGFCYDGVE (127 aa)) the chain is on the extracellular side. Cystine bridges form between Cys271–Cys381 and Cys299–Cys366. Asn351 carries N-linked (GlcNAc...) asparagine glycosylation. A helical transmembrane segment spans residues 387–407 (GLIYLVLFSFVTALMFSSIVC). The Cytoplasmic segment spans residues 408–522 (SVPHTWQQRR…TNRPETDPVH (115 aa)). Residues 483-522 (QNPRCENTPLIGRESPPPSYTSSMRAKYLATNRPETDPVH) form a disordered region.

The protein belongs to the tweety family. Homotetramer; disulfide-linked. Forms cis-homodimers in the presence of Ca(2+).

Its subcellular location is the cell membrane. It carries out the reaction chloride(in) = chloride(out). The catalysed reaction is L-glutamate(out) = L-glutamate(in). Functionally, may act as a calcium-independent, swelling-dependent volume-regulated anion channel (VRAC-swell) which plays a pivotal role in the process of regulatory volume decrease (RVD) in the brain through the efflux of anions like chloride and organic osmolytes like glutamate. Probable large-conductance Ca(2+)-activated chloride channel. The chain is Protein tweety homolog 3 (ttyh3) from Xenopus laevis (African clawed frog).